Consider the following 581-residue polypeptide: Proline--tRNA ligase (581 aa).

Belongs to the class-II aminoacyl-tRNA synthetase family. ProS type 1 subfamily. In terms of assembly, homodimer.

It localises to the cytoplasm. It catalyses the reaction tRNA(Pro) + L-proline + ATP = L-prolyl-tRNA(Pro) + AMP + diphosphate. Functionally, catalyzes the attachment of proline to tRNA(Pro) in a two-step reaction: proline is first activated by ATP to form Pro-AMP and then transferred to the acceptor end of tRNA(Pro). As ProRS can inadvertently accommodate and process non-cognate amino acids such as alanine and cysteine, to avoid such errors it has two additional distinct editing activities against alanine. One activity is designated as 'pretransfer' editing and involves the tRNA(Pro)-independent hydrolysis of activated Ala-AMP. The other activity is designated 'posttransfer' editing and involves deacylation of mischarged Ala-tRNA(Pro). The misacylated Cys-tRNA(Pro) is not edited by ProRS. The protein is Proline--tRNA ligase of Blochmanniella pennsylvanica (strain BPEN).